The chain runs to 199 residues: UPF0301 protein Anae109_0457 (199 aa).

Belongs to the UPF0301 (AlgH) family.

This Anaeromyxobacter sp. (strain Fw109-5) protein is UPF0301 protein Anae109_0457.